A 797-amino-acid polypeptide reads, in one-letter code: Probable DNA polymerase (797 aa).

The protein belongs to the DNA polymerase type-B family.

The protein localises to the mitochondrion. The catalysed reaction is DNA(n) + a 2'-deoxyribonucleoside 5'-triphosphate = DNA(n+1) + diphosphate. The sequence is that of Probable DNA polymerase from Agaricus bitorquis (Pavement mushroom).